Here is a 422-residue protein sequence, read N- to C-terminus: Aspartate--tRNA(Asp/Asn) ligase (422 aa).

Residue glutamate 158 coordinates L-aspartate. The segment at 180 to 183 (QLYK) is aspartate. Arginine 201 lines the L-aspartate pocket. ATP contacts are provided by residues 201–203 (RME), 209–211 (RHL), and glutamate 345. L-aspartate-binding residues include serine 348 and arginine 352. 393–396 (GAER) serves as a coordination point for ATP.

The protein belongs to the class-II aminoacyl-tRNA synthetase family. Type 2 subfamily. Homodimer. Makes part of a ribonucleoprotein particle (RNP) called transamidosome that allows channelling of the aa-tRNA from non-discriminating aspartyl-tRNA synthetase active site to the GatCAB amidotransferase site. The transamidosome complex is formed by two GatCABs, one dimeric ND-AspRSs and two tRNAs(Asn) molecules.

The protein localises to the cytoplasm. It catalyses the reaction tRNA(Asx) + L-aspartate + ATP = L-aspartyl-tRNA(Asx) + AMP + diphosphate. Its function is as follows. Aspartyl-tRNA synthetase with relaxed tRNA specificity since it is able to aspartylate not only its cognate tRNA(Asp) but also tRNA(Asn) with similar efficiencies. Reaction proceeds in two steps: L-aspartate is first activated by ATP to form Asp-AMP and then transferred to the acceptor end of tRNA(Asp/Asn). This chain is Aspartate--tRNA(Asp/Asn) ligase (aspS2), found in Thermus thermophilus (strain ATCC 27634 / DSM 579 / HB8).